Reading from the N-terminus, the 225-residue chain is O-methyltransferase rstn1 (225 aa).

2 residues coordinate S-adenosyl-L-methionine: Q97 and H142.

Belongs to the methyltransferase superfamily.

The enzyme catalyses desmethylrestrictinol + S-adenosyl-L-methionine = restrictinol + S-adenosyl-L-homocysteine + H(+). It participates in antifungal biosynthesis. Its function is as follows. O-methyltransferase; part of the gene cluster that mediates the biosynthesis of the tetrahydropyranyl antifungal agent restricticin that acts as an inhibitor of CYP51 and blocks the ergosterol biosynthesis. Within the pathway, rstn1 uses S-adenosylmethionine to methylate position C4 of desmethylrestrictinol to produce restrictinol. The highly reducing polyketide synthase rstn3, the short chain dehydrogenase rstn4, the cyclase rstn5, the FAD-dependent monooxygenase rstn6 and the enoylreductase rstn7 are required to generate the first stable intermediate desmethylrestrictinol. Rstn3 with rstn7 biosynthesize the first polyketide chain intermediate that is reduced by rstn4, followed by epoxidation by rstn6 before 6-endo cyclization via epoxide opening by rstn5 leads to desmethylrestrictinol. The methyltransferase rstn1 then catalyzes the C4 O-methylation of desmethylrestrictinol to produce restrictinol, and the nonribosomal peptide synthetase rstn8 catalyzes the C3 esterification of restrictinol with glycine that leads to restricticin. The chain is O-methyltransferase rstn1 from Aspergillus nomiae NRRL (strain ATCC 15546 / NRRL 13137 / CBS 260.88 / M93).